Here is a 136-residue protein sequence, read N- to C-terminus: Preprocaerulein type I' (136 aa).

The first 26 residues, 1–26 (MFKGILLCVLFAVLSANPLSQPEGFA), serve as a signal peptide directing secretion. A propeptide spanning residues 27-136 (DEERDVRGLA…NALGGAPQQR (110 aa)) is cleaved from the precursor. The segment at 82–101 (GAPQQREANDERRFADDEDD) is disordered.

It belongs to the gastrin/cholecystokinin family. Expressed by the skin glands.

The protein localises to the secreted. In terms of biological role, the pharmacological activities of caerulein are quite similar to the physiological activities of gastrin and related peptides. In Xenopus laevis (African clawed frog), this protein is Preprocaerulein type I'.